Reading from the N-terminus, the 263-residue chain is Lens fiber major intrinsic protein (263 aa).

At 1–9 the chain is on the cytoplasmic side; sequence MWELRSASF. Residues 10–29 traverse the membrane as a helical segment; the sequence is WRAIFAEFFATLFYVFFGLG. At 30–41 the chain is on the extracellular side; that stretch reads ASLRWAPGPLHV. A helical membrane pass occupies residues 42–59; it reads LQVALAFGLALATLVQTV. Topologically, residues 60-61 are cytoplasmic; sequence GH. The segment at residues 62-77 is an intramembrane region (discontinuously helical); the sequence is ISGAHVNPAVTFAFLV. The NPA 1 signature appears at 68 to 70; it reads NPA. At 78-82 the chain is on the cytoplasmic side; the sequence is GSQMS. The chain crosses the membrane as a helical span at residues 83–106; sequence LLRAFCYIAAQLLGAVAGAAVLYS. Over 107–127 the chain is Extracellular; it reads VTPPAVRGNLALNTLHAGVSV. Residues 128-148 traverse the membrane as a helical segment; it reads GQATTVEIFLTLQFVLCIFAT. Residues 149 to 156 lie on the Cytoplasmic side of the membrane; the sequence is YDERRNGR. The helical transmembrane segment at 157-175 threads the bilayer; it reads MGSVALAVGFSLTLGHLFG. The Extracellular portion of the chain corresponds to 176 to 178; sequence MYY. The segment at residues 179-193 is an intramembrane region (discontinuously helical); sequence TGAGMNPARSFAPAI. The NPA 2 signature appears at 184 to 186; that stretch reads NPA. Over 194 to 200 the chain is Extracellular; it reads LTRNFSN. A helical membrane pass occupies residues 201–222; that stretch reads HWVYWVGPIIGGGLGSLLYDFL. At 223–263 the chain is on the cytoplasmic side; that stretch reads LFPRLKSVSERLSILKGARPSDSNGQPEGTGEPVELKTQAL. The tract at residues 227-237 is interaction with CALM; it reads LKSVSERLSIL. A phosphoserine mark is found at S235, S243, and S245. A disordered region spans residues 240–263; the sequence is ARPSDSNGQPEGTGEPVELKTQAL. A Deamidated asparagine modification is found at N246.

It belongs to the MIP/aquaporin (TC 1.A.8) family. As to quaternary structure, homotetramer; each monomer provides an independent water pore. Two homotetramers on opposing membranes can dimerize, forming a cell-cell junction. Interacts with CALM; the calcium-calmodulin/CALM complex interacts with the cytoplasmic domains of two aquaporins, leading to channel closure. Interacts with BFSP1 (via C-terminus); prevents calcium-dependent inhibition of the water channel activity. Post-translationally, subject to partial proteolytic cleavage in the eye lens core. Partial proteolysis promotes interactions between tetramers from adjoining membranes. Fatty acylated at Met-1 and Lys-238. The acyl modifications, in decreasing order of ion abundance, are: oleoyl (C18:1) &gt; palmitoyl (C16:0) &gt; stearoyl (C18:0) &gt; eicosenoyl (C20:1) &gt; dihomo-gamma-linolenoyl (C20:3) &gt; palmitoleoyl (C16:1) &gt; eicosadienoyl (C20:2).

Its subcellular location is the cell membrane. The protein resides in the cell junction. The enzyme catalyses H2O(in) = H2O(out). Its activity is regulated as follows. The water channel activity is inhibited by calcium through calmodulin/CALM. Aquaporins form homotetrameric transmembrane channels, with each monomer independently mediating water transport across the plasma membrane along its osmotic gradient. Specifically expressed in lens fiber cells, this aquaporin is crucial for maintaining lens water homeostasis and transparency. Beyond water permeability, it also acts as a cell-to-cell adhesion molecule, forming thin junctions between lens fiber cells that are essential for maintaining the ordered structure and transparency of the lens. The sequence is that of Lens fiber major intrinsic protein from Mus musculus (Mouse).